The following is a 1064-amino-acid chain: Serine protease inhibitor Kazal-type 5 (1064 aa).

Positions 1 to 22 (MKIATVSVLLPLALCLIQDAAS) are cleaved as a signal peptide. One can recognise a Kazal-like 1; atypical domain in the interval 28–66 (EMCHEFQAFMKNGKLFCPQDKKFFQSLDGIMFINKCATC). 21 disulfide bridges follow: Cys30–Cys66, Cys44–Cys63, Cys97–Cys133, Cys111–Cys130, Cys119–Cys151, Cys161–Cys197, Cys175–Cys194, Cys225–Cys261, Cys239–Cys258, Cys297–Cys333, Cys311–Cys330, Cys367–Cys403, Cys381–Cys400, Cys437–Cys473, Cys451–Cys470, Cys496–Cys532, Cys510–Cys529, Cys567–Cys603, Cys581–Cys600, Cys632–Cys668, and Cys646–Cys665. 14 consecutive Kazal-like domains span residues 91–153 (APTE…ECKS), 155–216 (NPEQ…ETRI), 219–285 (NAEK…KAEE), 291–352 (REIV…ARAR), 361–423 (TSYA…KSRN), 431–489 (ASFE…KAKR), 490–551 (EAAK…EEKG), 561–622 (EAVQ…PRAK), 626–688 (EAEK…EDQR), 701–757 (GNTQ…KNEY), 768–830 (ESGK…EDRS), 843–905 (NDKE…EKSS), 910–971 (NNAK…EKPS), and 987–1048 (SLDS…KCEE). Residues 676–688 (NEERKRKEEEDQR) are compositionally biased toward basic and acidic residues. The disordered stretch occupies residues 676–705 (NEERKRKEEEDQRNAAGHGSSGGGGGNTQD). 6 cysteine pairs are disulfide-bonded: Cys707-Cys743, Cys721-Cys740, Cys774-Cys810, Cys788-Cys807, Cys849-Cys885, and Cys863-Cys882. The segment at 751–775 (AERKNEYSRSRSNGTGSESGKDTCD) is disordered. Positions 818–849 (AAEKKKKEDEDRSNTGERSNTGERSNDKEDLC) are disordered. Positions 895 to 905 (ERKKKDEEKSS) are enriched in basic and acidic residues. Positions 895–915 (ERKKKDEEKSSSKPSNNAKDE) are disordered. Cystine bridges form between Cys916–Cys952 and Cys930–Cys949. The segment covering 967–977 (QEKPSHVRASQ) has biased composition (basic and acidic residues). Positions 967-987 (QEKPSHVRASQEEDSPDSFSS) are disordered. 3 disulfides stabilise this stretch: Cys993-Cys1028, Cys1006-Cys1025, and Cys1014-Cys1046. Positions 1041 to 1064 (RSTGKCEESSTPGTTAASMPPSDE) are disordered.

Proteolytically processed by furin in individual domains (D1, D5, D6, D8 through D11, and D9 through D15) exhibiting various inhibitory potentials for multiple proteases. As to expression, highly expressed in the thymus and stratum corneum. Also found in the oral mucosa, parathyroid gland, Bartholin's glands, tonsils, and vaginal epithelium. Very low levels are detected in lung, kidney, and prostate.

It localises to the secreted. Serine protease inhibitor, probably important for the anti-inflammatory and/or antimicrobial protection of mucous epithelia. Contribute to the integrity and protective barrier function of the skin by regulating the activity of defense-activating and desquamation-involved proteases. Inhibits KLK5, it's major target, in a pH-dependent manner. Inhibits KLK7, KLK14 CASP14, and trypsin. The polypeptide is Serine protease inhibitor Kazal-type 5 (SPINK5) (Homo sapiens (Human)).